The sequence spans 207 residues: Interferon kappa (207 aa).

The signal sequence occupies residues 1–27 (MSTKPDMIQKCLWLEILMGIFIAGTLS). 2 disulfide bridges follow: Cys30/Cys128 and Cys59/Cys181. Positions 118–148 (LDQQAEYLNQCLEEDKNENEDMKEMKENEMK) form a coiled coil.

This sequence belongs to the alpha/beta interferon family. In terms of tissue distribution, expressed in keratinocytes, monocytes and in resting dendritic cells.

The protein resides in the secreted. May play a role in the regulation of immune cell function. Cytokine that imparts cellular protection against viral infection in a species-specific manner. Activates the interferon-stimulated response element signaling pathway. It is able to directly modulate cytokine release from monocytes and dendritic cells. Binds heparin. The polypeptide is Interferon kappa (IFNK) (Homo sapiens (Human)).